Reading from the N-terminus, the 159-residue chain is S-ribosylhomocysteine lyase (159 aa).

The Fe cation site is built by histidine 53, histidine 57, and cysteine 124.

The protein belongs to the LuxS family. As to quaternary structure, homodimer. Fe cation is required as a cofactor.

It catalyses the reaction S-(5-deoxy-D-ribos-5-yl)-L-homocysteine = (S)-4,5-dihydroxypentane-2,3-dione + L-homocysteine. Involved in the synthesis of autoinducer 2 (AI-2) which is secreted by bacteria and is used to communicate both the cell density and the metabolic potential of the environment. The regulation of gene expression in response to changes in cell density is called quorum sensing. Catalyzes the transformation of S-ribosylhomocysteine (RHC) to homocysteine (HC) and 4,5-dihydroxy-2,3-pentadione (DPD). The sequence is that of S-ribosylhomocysteine lyase from Porphyromonas gingivalis (strain ATCC 33277 / DSM 20709 / CIP 103683 / JCM 12257 / NCTC 11834 / 2561).